Consider the following 238-residue polypeptide: U2 small nuclear ribonucleoprotein A' (238 aa).

4 LRR repeats span residues 19–40 (KQVTLSLRSLKIPYLENLGITK), 42–63 (TYEVIDLTDNELIELSNFPRLK), 64–84 (NLKVLLVGNNNITGINDDKLP), and 89–110 (HLQSISFIHNNISKFSDVRILC). Positions 123–161 (NPITDSPNYRYFIVWLIPTLKVLDFSKVKQKELVKAKEL) constitute an LRRCT domain.

This sequence belongs to the U2 small nuclear ribonucleoprotein A family. Associated with the spliceosome.

The protein localises to the nucleus. Functionally, involved in pre-mRNA splicing. The sequence is that of U2 small nuclear ribonucleoprotein A' (LEA1) from Debaryomyces hansenii (strain ATCC 36239 / CBS 767 / BCRC 21394 / JCM 1990 / NBRC 0083 / IGC 2968) (Yeast).